A 264-amino-acid polypeptide reads, in one-letter code: Thymidylate synthase (264 aa).

Arg21 is a dUMP binding site. His51 lines the (6R)-5,10-methylene-5,6,7,8-tetrahydrofolate pocket. Position 126 to 127 (126 to 127 (RR)) interacts with dUMP. The active-site Nucleophile is the Cys146. DUMP-binding positions include 166–169 (RSCD), Asn177, and 207–209 (HLY). Asp169 serves as a coordination point for (6R)-5,10-methylene-5,6,7,8-tetrahydrofolate. Residue Ala263 participates in (6R)-5,10-methylene-5,6,7,8-tetrahydrofolate binding.

The protein belongs to the thymidylate synthase family. Bacterial-type ThyA subfamily. In terms of assembly, homodimer.

It localises to the cytoplasm. It catalyses the reaction dUMP + (6R)-5,10-methylene-5,6,7,8-tetrahydrofolate = 7,8-dihydrofolate + dTMP. It functions in the pathway pyrimidine metabolism; dTTP biosynthesis. Catalyzes the reductive methylation of 2'-deoxyuridine-5'-monophosphate (dUMP) to 2'-deoxythymidine-5'-monophosphate (dTMP) while utilizing 5,10-methylenetetrahydrofolate (mTHF) as the methyl donor and reductant in the reaction, yielding dihydrofolate (DHF) as a by-product. This enzymatic reaction provides an intracellular de novo source of dTMP, an essential precursor for DNA biosynthesis. The sequence is that of Thymidylate synthase from Shewanella baltica (strain OS155 / ATCC BAA-1091).